We begin with the raw amino-acid sequence, 425 residues long: Glutamyl-tRNA reductase (425 aa).

Substrate is bound by residues 49-52 (TCNR), serine 107, 112-114 (EPQ), and glutamine 118. The Nucleophile role is filled by cysteine 50. 187–192 (GAGETI) is an NADP(+) binding site.

The protein belongs to the glutamyl-tRNA reductase family. In terms of assembly, homodimer.

It carries out the reaction (S)-4-amino-5-oxopentanoate + tRNA(Glu) + NADP(+) = L-glutamyl-tRNA(Glu) + NADPH + H(+). It functions in the pathway porphyrin-containing compound metabolism; protoporphyrin-IX biosynthesis; 5-aminolevulinate from L-glutamyl-tRNA(Glu): step 1/2. In terms of biological role, catalyzes the NADPH-dependent reduction of glutamyl-tRNA(Glu) to glutamate 1-semialdehyde (GSA). The polypeptide is Glutamyl-tRNA reductase (Pseudomonas syringae pv. syringae (strain B728a)).